A 78-amino-acid polypeptide reads, in one-letter code: MSKVCQVTGKRPVVGNNVSHANNKTKRRFEPNLHHHRFWLESEKRFVRLRLTTKGMRIIDKLGIEKVVADLRAQGQKI.

This sequence belongs to the bacterial ribosomal protein bL28 family.

This chain is Large ribosomal subunit protein bL28, found in Acinetobacter baylyi (strain ATCC 33305 / BD413 / ADP1).